The primary structure comprises 790 residues: Vacuolar protein sorting-associated protein 35C (790 aa).

Methionine 1 bears the N-acetylmethionine mark.

Belongs to the VPS35 family. Component of the retromer complex which consists of VPS29 (MAG1), VPS26 (VPS26A or VPS26B), VPS35 (VPS35A or VPS35B or VPS35C), VPS5/17 (SNX1 or SNX2A or SNX2B). Component of a retromer subcomplex consisting of VPS29 (MAG1), VPS26 (VPS26A or VPS26B), VPS35 (VPS35A or VPS35B or VPS35C).

The protein localises to the cytoplasm. It localises to the endosome membrane. The protein resides in the prevacuolar compartment membrane. Its subcellular location is the golgi apparatus. It is found in the trans-Golgi network membrane. Plays a role in vesicular protein sorting. Component of the membrane-associated retromer complex which is essential in endosome-to-Golgi retrograde transport. Also involved in the efficient sorting of seed storage proteins. The VPS29-VPS26-VPS35 subcomplex may be involved in recycling of specific cargos from endosome to the plasma membrane. This chain is Vacuolar protein sorting-associated protein 35C (VPS35C), found in Arabidopsis thaliana (Mouse-ear cress).